The following is a 177-amino-acid chain: Large ribosomal subunit protein uL6 (177 aa).

It belongs to the universal ribosomal protein uL6 family. As to quaternary structure, part of the 50S ribosomal subunit.

This protein binds to the 23S rRNA, and is important in its secondary structure. It is located near the subunit interface in the base of the L7/L12 stalk, and near the tRNA binding site of the peptidyltransferase center. This chain is Large ribosomal subunit protein uL6, found in Rhizorhabdus wittichii (strain DSM 6014 / CCUG 31198 / JCM 15750 / NBRC 105917 / EY 4224 / RW1) (Sphingomonas wittichii).